A 98-amino-acid polypeptide reads, in one-letter code: NADH-ubiquinone oxidoreductase chain 4L (98 aa).

3 helical membrane-spanning segments follow: residues 1–21, 29–49, and 59–79; these read MTAI…GVLV, TLLC…LLIT, and LPLT…ALLV.

Belongs to the complex I subunit 4L family. In terms of assembly, core subunit of respiratory chain NADH dehydrogenase (Complex I) which is composed of 45 different subunits.

The protein localises to the mitochondrion inner membrane. The enzyme catalyses a ubiquinone + NADH + 5 H(+)(in) = a ubiquinol + NAD(+) + 4 H(+)(out). Its function is as follows. Core subunit of the mitochondrial membrane respiratory chain NADH dehydrogenase (Complex I) which catalyzes electron transfer from NADH through the respiratory chain, using ubiquinone as an electron acceptor. Part of the enzyme membrane arm which is embedded in the lipid bilayer and involved in proton translocation. The chain is NADH-ubiquinone oxidoreductase chain 4L (MT-ND4L) from Notoryctes typhlops (Southern marsupial mole).